A 468-amino-acid chain; its full sequence is ATP synthase subunit beta (468 aa).

155 to 162 (GGAGVGKT) provides a ligand contact to ATP.

Belongs to the ATPase alpha/beta chains family. As to quaternary structure, F-type ATPases have 2 components, CF(1) - the catalytic core - and CF(0) - the membrane proton channel. CF(1) has five subunits: alpha(3), beta(3), gamma(1), delta(1), epsilon(1). CF(0) has three main subunits: a(1), b(2) and c(9-12). The alpha and beta chains form an alternating ring which encloses part of the gamma chain. CF(1) is attached to CF(0) by a central stalk formed by the gamma and epsilon chains, while a peripheral stalk is formed by the delta and b chains.

The protein localises to the cell membrane. The enzyme catalyses ATP + H2O + 4 H(+)(in) = ADP + phosphate + 5 H(+)(out). In terms of biological role, produces ATP from ADP in the presence of a proton gradient across the membrane. The catalytic sites are hosted primarily by the beta subunits. The protein is ATP synthase subunit beta of Streptococcus equi subsp. zooepidemicus (strain H70).